A 197-amino-acid chain; its full sequence is Probable chorismate pyruvate-lyase (197 aa).

Substrate-binding residues include Arg-66, Leu-104, and Glu-169.

The protein belongs to the UbiC family.

It localises to the cytoplasm. The catalysed reaction is chorismate = 4-hydroxybenzoate + pyruvate. It functions in the pathway cofactor biosynthesis; ubiquinone biosynthesis. Its function is as follows. Removes the pyruvyl group from chorismate, with concomitant aromatization of the ring, to provide 4-hydroxybenzoate (4HB) for the ubiquinone pathway. This chain is Probable chorismate pyruvate-lyase, found in Albidiferax ferrireducens (strain ATCC BAA-621 / DSM 15236 / T118) (Rhodoferax ferrireducens).